The following is a 217-amino-acid chain: Adapter protein MecA (217 aa).

The protein belongs to the MecA family. Homodimer.

Its function is as follows. Enables the recognition and targeting of unfolded and aggregated proteins to the ClpC protease or to other proteins involved in proteolysis. The protein is Adapter protein MecA of Listeria innocua serovar 6a (strain ATCC BAA-680 / CLIP 11262).